The primary structure comprises 1649 residues: PHD and RING finger domain-containing protein 1 (1649 aa).

A disordered region spans residues 1 to 79 (MDDDSLDELV…RSGSEDSEDD (79 aa)). Ser5 carries the post-translational modification Phosphoserine. Over residues 54–79 (TDGEDEGASEEEDLEDRSGSEDSEDD) the composition is skewed to acidic residues. Residues 108-149 (CPICLNAFRDQAVGTPENCAHYFCLDCIVEWSKNANSCPVDR) form an RING-type; degenerate zinc finger. The PHD-type zinc-finger motif lies at 183–233 (PTFCEVCGRSDREDRLLLCDGCDAGYHMECLDPPLQEVPVDEWFCPECAAP). The disordered stretch occupies residues 324-398 (VYQRPLTPRT…TRSRIARTLG (75 aa)). Residue Thr330 is modified to Phosphothreonine. The span at 334–353 (PARRKRKTRRRKKVPGRKKT) shows a compositional bias: basic residues. Residues 354-366 (PSGPSAKSKSSAT) are compositionally biased toward low complexity. The span at 367 to 382 (RSKKRQHRVKKRRGKK) shows a compositional bias: basic residues. Phosphoserine is present on residues Ser445 and Ser455. 4 disordered regions span residues 534-600 (KRAA…GAPV), 644-871 (SAAS…PKAQ), 888-1240 (FGTE…KAPL), and 1281-1395 (IQLD…PLLR). Positions 568 to 589 (SPAQGPSGNRPQSTGLSCQGRS) are enriched in polar residues. Basic and acidic residues-rich tracts occupy residues 685-697 (IRRD…RDAA) and 727-742 (TRAE…REPG). Polar residues predominate over residues 786 to 796 (AHSSQLSSPGF). Residues 802–812 (PVDDKEQRKEN) are compositionally biased toward basic and acidic residues. 6 positions are modified to phosphoserine: Ser814, Ser845, Ser846, Ser864, Ser867, and Ser915. Polar residues-rich tracts occupy residues 835–848 (PTGS…SSPE) and 859–871 (ITRT…PKAQ). Thr917 carries the phosphothreonine modification. Phosphoserine is present on residues Ser936, Ser973, and Ser991. A compositionally biased stretch (low complexity) spans 988–999 (RPPSRSRSTSSS). Positions 1000 to 1011 (RSRKKAKRKRVS) are enriched in basic residues. The segment covering 1012-1030 (REHGRTRSGTRSESRDRSS) has biased composition (basic and acidic residues). Residues 1043–1053 (RRQRSKAKSRR) are compositionally biased toward basic residues. Residues 1054–1063 (SSSDRSSSRE) are compositionally biased toward basic and acidic residues. Over residues 1064 to 1090 (RAKRKKAKDKSREHRRGPWGHSRRTSR) the composition is skewed to basic residues. Residues 1091–1101 (SRSGSPGSSSY) are compositionally biased toward low complexity. The segment covering 1106–1118 (SRKKKKRRSASRP) has biased composition (basic residues). A phosphoserine mark is found at Ser1124 and Ser1128. 2 stretches are compositionally biased toward basic and acidic residues: residues 1141–1151 (RSHERPDRKES) and 1181–1198 (REKW…KGAV). Phosphoserine occurs at positions 1202 and 1229. A compositionally biased stretch (low complexity) spans 1284 to 1297 (DDMSSPPSPESTDS). Over residues 1345–1356 (HLLRPDAAEKAE) the composition is skewed to basic and acidic residues. Residues Ser1359, Ser1360, and Ser1371 each carry the phosphoserine modification. Thr1404 carries the post-translational modification Phosphothreonine. Disordered stretches follow at residues 1407 to 1439 (LQES…WDME), 1455 to 1486 (FPSH…AQPS), 1526 to 1556 (TPAS…EKTK), and 1630 to 1649 (MRRH…GAEG). A compositionally biased stretch (polar residues) spans 1531-1540 (PASQATAASN). Over residues 1541-1556 (SEEKTPAPRLAAEKTK) the composition is skewed to basic and acidic residues. Residues 1549 to 1579 (RLAAEKTKKEEYMKKLHMQERAVEEVKLAIK) are a coiled coil.

As to quaternary structure, interacts with POLR2A (via the C-terminal domain).

This Homo sapiens (Human) protein is PHD and RING finger domain-containing protein 1 (PHRF1).